A 408-amino-acid polypeptide reads, in one-letter code: Tyrosine--tRNA ligase (408 aa).

The 'HIGH' region motif lies at 46–55; it reads PTAPDLHVGH. The short motif at 230 to 234 is the 'KMSKS' region element; that stretch reads KMSKS. Lysine 233 provides a ligand contact to ATP. The region spanning 343–404 is the S4 RNA-binding domain; sequence VWICRLLTDA…GKRRFARIKF (62 aa).

It belongs to the class-I aminoacyl-tRNA synthetase family. TyrS type 2 subfamily. As to quaternary structure, homodimer.

The protein resides in the cytoplasm. The catalysed reaction is tRNA(Tyr) + L-tyrosine + ATP = L-tyrosyl-tRNA(Tyr) + AMP + diphosphate + H(+). Functionally, catalyzes the attachment of tyrosine to tRNA(Tyr) in a two-step reaction: tyrosine is first activated by ATP to form Tyr-AMP and then transferred to the acceptor end of tRNA(Tyr). This Syntrophotalea carbinolica (strain DSM 2380 / NBRC 103641 / GraBd1) (Pelobacter carbinolicus) protein is Tyrosine--tRNA ligase.